The sequence spans 354 residues: Galectin-9 (354 aa).

Galectin domains are found at residues 17–147 (FTGI…INFQ) and 226–354 (FFTS…HVQT). Residues asparagine 47, histidine 60, arginine 64, asparagine 74, 81-87 (WGPEERK), histidine 266, arginine 270, threonine 280, and 286-292 (WGPEERS) contribute to the a beta-D-galactoside site.

In terms of tissue distribution, the isoform Long is expressed exclusively in the small intestine.

It localises to the cytoplasm. It is found in the nucleus. The protein localises to the secreted. Binds galactosides. Has high affinity for the Forssman pentasaccharide. Ligand for HAVCR2/TIM3. Binding to HAVCR2 induces T-helper type 1 lymphocyte (Th1) death. Also stimulates bactericidal activity in infected macrophages by causing macrophage activation and IL1B secretion which restricts intracellular bacterial growth. Ligand for P4HB; the interaction retains P4HB at the cell surface of Th2 T helper cells, increasing disulfide reductase activity at the plasma membrane, altering the plasma membrane redox state and enhancing cell migration. Ligand for CD44; the interaction enhances binding of SMAD3 to the FOXP3 promoter, leading to up-regulation of FOXP3 expression and increased induced regulatory T (iTreg) cell stability and suppressive function. Promotes ability of mesenchymal stromal cells to suppress T-cell proliferation. Expands regulatory T-cells and induces cytotoxic T-cell apoptosis following virus infection. Activates ERK1/2 phosphorylation inducing cytokine (IL-6, IL-8, IL-12) and chemokine (CCL2) production in mast and dendritic cells. Inhibits degranulation and induces apoptosis of mast cells. Induces maturation and migration of dendritic cells. Inhibits natural killer (NK) cell function. Can transform NK cell phenotype from peripheral to decidual during pregnancy. Astrocyte derived galectin-9 enhances microglial TNF production. May play a role in thymocyte-epithelial interactions relevant to the biology of the thymus. May provide the molecular basis for urate flux across cell membranes, allowing urate that is formed during purine metabolism to efflux from cells and serving as an electrogenic transporter that plays an important role in renal and gastrointestinal urate excretion. Highly selective to the anion urate. In Rattus norvegicus (Rat), this protein is Galectin-9 (Lgals9).